The chain runs to 256 residues: Probable transcriptional regulatory protein A1I_03240 (256 aa).

Positions 1-21 are disordered; sequence MAGHSKFKNIQHRKGAQDKKR.

It belongs to the TACO1 family.

It localises to the cytoplasm. The chain is Probable transcriptional regulatory protein A1I_03240 from Rickettsia bellii (strain OSU 85-389).